Consider the following 226-residue polypeptide: PDGF-related-transforming protein sis (226 aa).

Basic residues predominate over residues 201 to 215 (RRPPKGKHRKCKHTH). The interval 201–226 (RRPPKGKHRKCKHTHDKTALKETLGA) is disordered.

The protein belongs to the PDGF/VEGF growth factor family.

This Woolly monkey sarcoma virus (WMSV) protein is PDGF-related-transforming protein sis (V-SIS).